Reading from the N-terminus, the 391-residue chain is Flagellin (391 aa).

The protein belongs to the bacterial flagellin family.

Its subcellular location is the secreted. It is found in the bacterial flagellum. Its function is as follows. Flagellin is the subunit protein which polymerizes to form the filaments of bacterial flagella. The protein is Flagellin (flaA) of Bordetella bronchiseptica (strain ATCC BAA-588 / NCTC 13252 / RB50) (Alcaligenes bronchisepticus).